A 332-amino-acid chain; its full sequence is Glyceraldehyde-3-phosphate dehydrogenase (332 aa).

Residues 10–11, Asp-32, and Met-77 each bind NAD(+); that span reads RI. Residues 148 to 150, Thr-179, 208 to 209, and Arg-231 contribute to the D-glyceraldehyde 3-phosphate site; these read SCT and TG. The active-site Nucleophile is the Cys-149. Asn-313 lines the NAD(+) pocket.

Belongs to the glyceraldehyde-3-phosphate dehydrogenase family. As to quaternary structure, homotetramer.

It localises to the cytoplasm. The enzyme catalyses D-glyceraldehyde 3-phosphate + phosphate + NAD(+) = (2R)-3-phospho-glyceroyl phosphate + NADH + H(+). Its pathway is carbohydrate degradation; glycolysis; pyruvate from D-glyceraldehyde 3-phosphate: step 1/5. This Phytophthora infestans (Potato late blight agent) protein is Glyceraldehyde-3-phosphate dehydrogenase (GPDA).